The primary structure comprises 360 residues: Membrane-bound lytic murein transglycosylase C (360 aa).

The N-terminal stretch at 1-16 is a signal peptide; it reads MKKYLALALIAPLLVS. A lipid anchor (N-palmitoyl cysteine) is attached at cysteine 17. Cysteine 17 carries the S-diacylglycerol cysteine lipid modification.

This sequence belongs to the transglycosylase Slt family.

Its subcellular location is the cell outer membrane. The enzyme catalyses Exolytic cleavage of the (1-&gt;4)-beta-glycosidic linkage between N-acetylmuramic acid (MurNAc) and N-acetylglucosamine (GlcNAc) residues in peptidoglycan, from either the reducing or the non-reducing ends of the peptidoglycan chains, with concomitant formation of a 1,6-anhydrobond in the MurNAc residue.. Functionally, murein-degrading enzyme. May play a role in recycling of muropeptides during cell elongation and/or cell division. The polypeptide is Membrane-bound lytic murein transglycosylase C (Klebsiella pneumoniae subsp. pneumoniae (strain ATCC 700721 / MGH 78578)).